Reading from the N-terminus, the 288-residue chain is Bis(5'-nucleosyl)-tetraphosphatase, symmetrical (288 aa).

It belongs to the Ap4A hydrolase family.

It catalyses the reaction P(1),P(4)-bis(5'-adenosyl) tetraphosphate + H2O = 2 ADP + 2 H(+). Its function is as follows. Hydrolyzes diadenosine 5',5'''-P1,P4-tetraphosphate to yield ADP. In Pseudomonas putida (strain ATCC 700007 / DSM 6899 / JCM 31910 / BCRC 17059 / LMG 24140 / F1), this protein is Bis(5'-nucleosyl)-tetraphosphatase, symmetrical.